The following is a 293-amino-acid chain: tRNA pseudouridine synthase B (293 aa).

Asp38 functions as the Nucleophile in the catalytic mechanism.

It belongs to the pseudouridine synthase TruB family. Type 1 subfamily.

The catalysed reaction is uridine(55) in tRNA = pseudouridine(55) in tRNA. Responsible for synthesis of pseudouridine from uracil-55 in the psi GC loop of transfer RNAs. This Microcystis aeruginosa (strain NIES-843 / IAM M-2473) protein is tRNA pseudouridine synthase B.